We begin with the raw amino-acid sequence, 605 residues long: Elongation factor 4 (605 aa).

One can recognise a tr-type G domain in the interval 11–193 (KRIRNFSIIA…RIVTQISPPK (183 aa)). GTP is bound by residues 23 to 28 (DHGKST) and 140 to 143 (NKVD).

It belongs to the TRAFAC class translation factor GTPase superfamily. Classic translation factor GTPase family. LepA subfamily.

It is found in the cell membrane. It carries out the reaction GTP + H2O = GDP + phosphate + H(+). In terms of biological role, required for accurate and efficient protein synthesis under certain stress conditions. May act as a fidelity factor of the translation reaction, by catalyzing a one-codon backward translocation of tRNAs on improperly translocated ribosomes. Back-translocation proceeds from a post-translocation (POST) complex to a pre-translocation (PRE) complex, thus giving elongation factor G a second chance to translocate the tRNAs correctly. Binds to ribosomes in a GTP-dependent manner. The chain is Elongation factor 4 from Phytoplasma australiense.